A 199-amino-acid chain; its full sequence is Prolactin (199 aa).

Cysteine 4 and cysteine 11 are disulfide-bonded. Serine 26 carries the phosphoserine modification. Asparagine 31 carries an N-linked (GlcNAc...) asparagine; partial glycan. Phosphoserine occurs at positions 34 and 90. 2 disulfides stabilise this stretch: cysteine 58–cysteine 174 and cysteine 191–cysteine 199.

This sequence belongs to the somatotropin/prolactin family. In terms of assembly, interacts with PRLR.

The protein localises to the secreted. Its function is as follows. Prolactin acts primarily on the mammary gland by promoting lactation. The sequence is that of Prolactin (PRL) from Camelus dromedarius (Dromedary).